A 234-amino-acid polypeptide reads, in one-letter code: Sugar fermentation stimulation protein homolog (234 aa).

Belongs to the SfsA family.

This Shewanella baltica (strain OS155 / ATCC BAA-1091) protein is Sugar fermentation stimulation protein homolog.